The sequence spans 340 residues: HPr kinase/phosphorylase (340 aa).

Residues H153 and K174 contribute to the active site. 168–175 (GRSGIGKS) is a binding site for ATP. S175 lines the Mg(2+) pocket. The active-site Proton acceptor; for phosphorylation activity. Proton donor; for dephosphorylation activity is D192. The interval 216–225 (MEIRGLGIID) is important for the catalytic mechanism of both phosphorylation and dephosphorylation. A Mg(2+)-binding site is contributed by E217. The active site involves R258. The tract at residues 279-284 (PIYPGK) is important for the catalytic mechanism of dephosphorylation.

Belongs to the HPrK/P family. In terms of assembly, homohexamer. Mg(2+) is required as a cofactor.

It carries out the reaction [HPr protein]-L-serine + ATP = [HPr protein]-O-phospho-L-serine + ADP + H(+). It catalyses the reaction [HPr protein]-O-phospho-L-serine + phosphate + H(+) = [HPr protein]-L-serine + diphosphate. In terms of biological role, catalyzes the ATP- as well as the pyrophosphate-dependent phosphorylation of a specific serine residue in HPr, a phosphocarrier protein of the phosphoenolpyruvate-dependent sugar phosphotransferase system (PTS). HprK/P also catalyzes the pyrophosphate-producing, inorganic phosphate-dependent dephosphorylation (phosphorolysis) of seryl-phosphorylated HPr (P-Ser-HPr). This is HPr kinase/phosphorylase from Chloroherpeton thalassium (strain ATCC 35110 / GB-78).